The sequence spans 309 residues: Calcium homeostasis modulator protein 5 (309 aa).

Over 1–15 the chain is Cytoplasmic; that stretch reads MDAFQSILKFFLNQK. A helical membrane pass occupies residues 16–37; that stretch reads TAIGYSFMALLTVGSERLFSLV. Residues arginine 32 and valine 37 each contribute to the a 1,2-diacyl-sn-glycero-3-phosphate site. The Extracellular segment spans residues 38 to 45; the sequence is AFKCPCSI. Intrachain disulfides connect cysteine 41-cysteine 127, cysteine 43-cysteine 158, and cysteine 142-cysteine 149. The chain crosses the membrane as a helical span at residues 46–70; sequence ENTAYGLVFLFAPAWVLLILGFFLN. Residues 71 to 99 are Cytoplasmic-facing; that stretch reads NKAWRLFTGCCMNPQKIFPRRRCCRFFYV. A helical membrane pass occupies residues 100-129; it reads LGHITLSSLVAPVMWLSVALLNGTFYECAM. Asparagine 121 is an a 1,2-diacyl-sn-glycero-3-phosphate binding site. The Extracellular segment spans residues 130–174; that stretch reads SGTRSTRLLEMICKGKPKECWEELHKVSCGKSSMAAMDSEEVRLS. A helical membrane pass occupies residues 175–200; sequence LQAQSQILGWCLICSASFFSLLTTCY. The Cytoplasmic segment spans residues 201 to 309; sequence ARCRSKVSYL…MILVGTAQSL (109 aa). Position 202 (arginine 202) interacts with a 1,2-diacyl-sn-glycero-3-phosphate.

Belongs to the CALHM family. As to quaternary structure, oligomerizes to form undecameric cone-shaped channels.

Its subcellular location is the membrane. May assemble to form large pore channels with gating and ion conductance likely regulated by membrane lipids. This chain is Calcium homeostasis modulator protein 5, found in Rattus norvegicus (Rat).